A 342-amino-acid chain; its full sequence is MRIKTRNFIMQTQQILTQLFDNQPLSQEQAAFIFGNIVKGELSNEQLAGALIALKIRGETIDEITGAVTALLAAAEPFPAPDYPFADIVGTGGDNADTINISTASAIVAASMGLKIAKHGNRSVSSKTGASDVLTALGVNIRMSTEQARKALDEIGIAFIFAQQYHLGFKYAGPVRQALKTRTIFNILGPLINPANPKRQLLGVYSPELLKPYAETNLRLNHEHSIIVHGCGLDEVAIHGLTQVAELRDGKIEYYNLSPKDFGFEPQPLESLRGGAPEENAKILTALLQGKGSEQQAQAVAMNTALLMKLFGHEDIKQNAQQVLEQLTTGKAFETLTKLTTY.

5-phospho-alpha-D-ribose 1-diphosphate is bound by residues Gly90, 93–94 (GD), Thr98, 100–103 (NIST), 118–126 (KHGNRSVSS), and Ala130. Gly90 contributes to the anthranilate binding site. A Mg(2+)-binding site is contributed by Ser102. Position 121 (Asn121) interacts with anthranilate. Residue Arg176 participates in anthranilate binding. Mg(2+)-binding residues include Asp234 and Glu235.

It belongs to the anthranilate phosphoribosyltransferase family. In terms of assembly, homodimer. Mg(2+) is required as a cofactor.

It catalyses the reaction N-(5-phospho-beta-D-ribosyl)anthranilate + diphosphate = 5-phospho-alpha-D-ribose 1-diphosphate + anthranilate. The protein operates within amino-acid biosynthesis; L-tryptophan biosynthesis; L-tryptophan from chorismate: step 2/5. Its function is as follows. Catalyzes the transfer of the phosphoribosyl group of 5-phosphorylribose-1-pyrophosphate (PRPP) to anthranilate to yield N-(5'-phosphoribosyl)-anthranilate (PRA). The sequence is that of Anthranilate phosphoribosyltransferase from Mannheimia succiniciproducens (strain KCTC 0769BP / MBEL55E).